A 198-amino-acid polypeptide reads, in one-letter code: NAD(P)H dehydrogenase (quinone) (198 aa).

One can recognise a Flavodoxin-like domain in the interval 4 to 189 (ILVLYYSMYG…SIARYQGEYV (186 aa)). FMN-binding positions include 10–15 (SMYGHI) and 78–80 (TRF). Position 12 (Tyr12) interacts with NAD(+). Position 98 (Trp98) interacts with substrate. FMN is bound by residues 113 to 118 (STGTGG) and His133.

Belongs to the WrbA family. Requires FMN as cofactor.

It carries out the reaction a quinone + NADH + H(+) = a quinol + NAD(+). It catalyses the reaction a quinone + NADPH + H(+) = a quinol + NADP(+). This is NAD(P)H dehydrogenase (quinone) from Citrobacter koseri (strain ATCC BAA-895 / CDC 4225-83 / SGSC4696).